We begin with the raw amino-acid sequence, 228 residues long: L-ribulose-5-phosphate 4-epimerase UlaF (228 aa).

Substrate is bound by residues 26-27 (GN), 43-44 (SG), and 72-73 (SS). Residues Asp74, His93, and His95 each contribute to the Zn(2+) site. Asp118 functions as the Proton donor/acceptor in the catalytic mechanism. His167 lines the Zn(2+) pocket. The Proton donor/acceptor role is filled by Tyr225.

This sequence belongs to the aldolase class II family. AraD/FucA subfamily. The cofactor is Zn(2+).

It carries out the reaction L-ribulose 5-phosphate = D-xylulose 5-phosphate. The protein operates within cofactor degradation; L-ascorbate degradation; D-xylulose 5-phosphate from L-ascorbate: step 4/4. Its function is as follows. Catalyzes the isomerization of L-ribulose 5-phosphate to D-xylulose 5-phosphate. Is involved in the anaerobic L-ascorbate utilization. This chain is L-ribulose-5-phosphate 4-epimerase UlaF, found in Escherichia coli O6:K15:H31 (strain 536 / UPEC).